Here is a 557-residue protein sequence, read N- to C-terminus: Dihydroxy-acid dehydratase (557 aa).

C49 is a binding site for [2Fe-2S] cluster. D81 provides a ligand contact to Mg(2+). C122 is a binding site for [2Fe-2S] cluster. 2 residues coordinate Mg(2+): D123 and K124. N6-carboxylysine is present on K124. C194 provides a ligand contact to [2Fe-2S] cluster. E446 contributes to the Mg(2+) binding site. The active-site Proton acceptor is S472.

The protein belongs to the IlvD/Edd family. In terms of assembly, homodimer. It depends on [2Fe-2S] cluster as a cofactor. Mg(2+) is required as a cofactor.

The catalysed reaction is (2R)-2,3-dihydroxy-3-methylbutanoate = 3-methyl-2-oxobutanoate + H2O. The enzyme catalyses (2R,3R)-2,3-dihydroxy-3-methylpentanoate = (S)-3-methyl-2-oxopentanoate + H2O. It functions in the pathway amino-acid biosynthesis; L-isoleucine biosynthesis; L-isoleucine from 2-oxobutanoate: step 3/4. It participates in amino-acid biosynthesis; L-valine biosynthesis; L-valine from pyruvate: step 3/4. Functionally, functions in the biosynthesis of branched-chain amino acids. Catalyzes the dehydration of (2R,3R)-2,3-dihydroxy-3-methylpentanoate (2,3-dihydroxy-3-methylvalerate) into 2-oxo-3-methylpentanoate (2-oxo-3-methylvalerate) and of (2R)-2,3-dihydroxy-3-methylbutanoate (2,3-dihydroxyisovalerate) into 2-oxo-3-methylbutanoate (2-oxoisovalerate), the penultimate precursor to L-isoleucine and L-valine, respectively. This Prochlorococcus marinus (strain MIT 9312) protein is Dihydroxy-acid dehydratase.